The sequence spans 1149 residues: Transforming acidic coiled-coil-containing protein 2 (1149 aa).

3 disordered regions span residues 1-73 (MGNE…GSNQ), 91-227 (SASP…ASSG), and 247-430 (PCSA…VPLT). Residues 13–35 (TSSVQSPRSLQPPGKSQSLQKQQ) are compositionally biased toward polar residues. Over residues 91–106 (SASPSAARASPAPLAP) the composition is skewed to low complexity. Residue serine 100 is modified to Phosphoserine. Residues 155–180 (KAPPAPPPPPPEVTPEPEVIDPPAPE) show a composition bias toward pro residues. The residue at position 265 (serine 265) is a Phosphoserine. 2 stretches are compositionally biased toward polar residues: residues 267–284 (ESVP…SLQA) and 300–317 (TLTT…SSTL). A compositionally biased stretch (basic residues) spans 318 to 334 (KRTKKTRPPSLKKKQAT). Serine 354 carries the post-translational modification Phosphoserine. Positions 358 to 368 (SEEHLAPETKT) are enriched in basic and acidic residues. A Phosphoserine modification is found at serine 419. Threonine 439 bears the Phosphothreonine mark. Residues 463-617 (SEDKGSWESQ…PAKKKKTPLK (155 aa)) are disordered. A compositionally biased stretch (basic residues) spans 481 to 498 (KIGKKPVAKMPLRRPKMK). Positions 508-596 (PASPPRSPTE…SPASFEIPAS (89 aa)) constitute an SPAZ domain. 2 positions are modified to phosphoserine: serine 510 and serine 514. Phosphothreonine is present on threonine 516. The segment covering 541-561 (NPFSSTSKMQESPKLSQQSYN) has biased composition (polar residues). Phosphoserine occurs at positions 552, 582, 585, 587, and 596. Over residues 575-590 (KASSKTPSSPSKSPAS) the composition is skewed to low complexity. Phosphothreonine occurs at positions 632, 653, and 657. 2 disordered regions span residues 636 to 665 (KKSP…SAIS) and 696 to 719 (DFPQ…SEEL). Residues 652–665 (PTPAATPEAPSAIS) show a composition bias toward low complexity. Over residues 701-716 (SDLSNFVNETKFNSPS) the composition is skewed to polar residues. Phosphoserine occurs at positions 714 and 736. Position 755 is a phosphothreonine (threonine 755). The segment at 756-780 (PQESPVKSPPVRMSDSPTPCSGSSF) is disordered. Serine 759 and serine 771 each carry phosphoserine. Over residues 770 to 780 (DSPTPCSGSSF) the composition is skewed to polar residues. Coiled-coil stretches lie at residues 877–905 (AQKL…LASR) and 948–1148 (DLDS…KMGK).

The protein belongs to the TACC family. As to quaternary structure, interacts with microtubules. Interacts with YEATS4, GCN5L2 and PCAF. Interacts with CCDC100/CEP120. In terms of processing, phosphorylated; which is required for localization in centrosome. In terms of tissue distribution, expressed in brain, kidney, lung, thymus and ovary. Not detectable in normal tissues at protein level.

Its subcellular location is the cytoplasm. It localises to the nucleus. It is found in the cytoskeleton. The protein localises to the microtubule organizing center. The protein resides in the centrosome. Functionally, plays a role in the microtubule-dependent coupling of the nucleus and the centrosome. Involved in the processes that regulate centrosome-mediated interkinetic nuclear migration (INM) of neural progenitors. May play a role in organizing centrosomal microtubules. The sequence is that of Transforming acidic coiled-coil-containing protein 2 (Tacc2) from Mus musculus (Mouse).